Consider the following 347-residue polypeptide: Holliday junction branch migration complex subunit RuvB (347 aa).

The interval 4–185 is large ATPase domain (RuvB-L); that stretch reads TDRLITPAPL…FGIISRLEFY (182 aa). Residues Leu24, Arg25, Gly66, Lys69, Thr70, Thr71, 132–134, Arg175, Tyr185, and Arg222 contribute to the ATP site; that span reads EDY. Thr70 contacts Mg(2+). The small ATPAse domain (RuvB-S) stretch occupies residues 186-256; sequence SVEELTQIVM…VADAALLMLD (71 aa). A head domain (RuvB-H) region spans residues 259-347; sequence AIGLDVMDRK…LSADLWDEKQ (89 aa). DNA is bound by residues Arg295, Arg314, and Arg319.

Belongs to the RuvB family. Homohexamer. Forms an RuvA(8)-RuvB(12)-Holliday junction (HJ) complex. HJ DNA is sandwiched between 2 RuvA tetramers; dsDNA enters through RuvA and exits via RuvB. An RuvB hexamer assembles on each DNA strand where it exits the tetramer. Each RuvB hexamer is contacted by two RuvA subunits (via domain III) on 2 adjacent RuvB subunits; this complex drives branch migration. In the full resolvosome a probable DNA-RuvA(4)-RuvB(12)-RuvC(2) complex forms which resolves the HJ.

The protein localises to the cytoplasm. The enzyme catalyses ATP + H2O = ADP + phosphate + H(+). In terms of biological role, the RuvA-RuvB-RuvC complex processes Holliday junction (HJ) DNA during genetic recombination and DNA repair, while the RuvA-RuvB complex plays an important role in the rescue of blocked DNA replication forks via replication fork reversal (RFR). RuvA specifically binds to HJ cruciform DNA, conferring on it an open structure. The RuvB hexamer acts as an ATP-dependent pump, pulling dsDNA into and through the RuvAB complex. RuvB forms 2 homohexamers on either side of HJ DNA bound by 1 or 2 RuvA tetramers; 4 subunits per hexamer contact DNA at a time. Coordinated motions by a converter formed by DNA-disengaged RuvB subunits stimulates ATP hydrolysis and nucleotide exchange. Immobilization of the converter enables RuvB to convert the ATP-contained energy into a lever motion, pulling 2 nucleotides of DNA out of the RuvA tetramer per ATP hydrolyzed, thus driving DNA branch migration. The RuvB motors rotate together with the DNA substrate, which together with the progressing nucleotide cycle form the mechanistic basis for DNA recombination by continuous HJ branch migration. Branch migration allows RuvC to scan DNA until it finds its consensus sequence, where it cleaves and resolves cruciform DNA. The protein is Holliday junction branch migration complex subunit RuvB of Nitrosospira multiformis (strain ATCC 25196 / NCIMB 11849 / C 71).